Here is a 344-residue protein sequence, read N- to C-terminus: Sulfate/thiosulfate import ATP-binding protein CysA (344 aa).

The region spanning 3-237 (IEVRNLVKKF…PATAFVHGFI (235 aa)) is the ABC transporter domain. Residue 35 to 42 (GPSGSGKT) coordinates ATP.

The protein belongs to the ABC transporter superfamily. Sulfate/tungstate importer (TC 3.A.1.6) family. As to quaternary structure, the complex is composed of two ATP-binding proteins (CysA), two transmembrane proteins (CysT and CysW) and a solute-binding protein (CysP).

The protein localises to the cell inner membrane. It catalyses the reaction sulfate(out) + ATP + H2O = sulfate(in) + ADP + phosphate + H(+). The catalysed reaction is thiosulfate(out) + ATP + H2O = thiosulfate(in) + ADP + phosphate + H(+). Functionally, part of the ABC transporter complex CysAWTP involved in sulfate/thiosulfate import. Responsible for energy coupling to the transport system. The polypeptide is Sulfate/thiosulfate import ATP-binding protein CysA (Bradyrhizobium diazoefficiens (strain JCM 10833 / BCRC 13528 / IAM 13628 / NBRC 14792 / USDA 110)).